Here is a 72-residue protein sequence, read N- to C-terminus: Caerin-regulated peptide (72 aa).

Residues 1 to 22 form the signal peptide; the sequence is MAFLKKSLLLVLFLGLVSLSIC. The propeptide occupies 23-43; sequence DEEKRENEDEEEQEDDEQSEE. Residues 24 to 46 form a disordered region; the sequence is EEKRENEDEEEQEDDEQSEEKRG. Over residues 30 to 41 the composition is skewed to acidic residues; the sequence is EDEEEQEDDEQS.

In terms of tissue distribution, expressed by the skin glands.

It localises to the secreted. Has antibacterial activity against Gram-positive bacterium M.luteus NCT C2665 and against Gram-negative bacterium E.coli K12D31. The chain is Caerin-regulated peptide from Agalychnis callidryas (Red-eyed tree frog).